A 342-amino-acid polypeptide reads, in one-letter code: Transcription initiation factor TFIID subunit 12 (342 aa).

The interval 1-221 (MKMEEFSPPT…QAPPPQMIPA (221 aa)) is disordered. A compositionally biased stretch (polar residues) spans 12-35 (PNNHVIVQANPQIAAALSTNSPMQ). 4 stretches are compositionally biased toward low complexity: residues 39–59 (PPQG…VGQP), 67–89 (PMRM…QMRA), 96–146 (QQQQ…HLMG), and 180–192 (QQIM…QQHQ). Positions 193 to 218 (QPPPSQQIQQPPIPQPQQQQAPPPQM) are enriched in pro residues. The region spanning 230–297 (EKSKLDDLMQ…EFILKNVYNM (68 aa)) is the Histone-fold domain.

Belongs to the TAF12 family. In terms of assembly, interacts (via histone-fold domain) with taf-4 (via the histone-fold domain). Interaction may facilitate the nuclear localization of taf-4.

It localises to the nucleus. Part of the general transcription factor complex TFIID. Plays a role in recruiting taf-4 to the nucleus and thereby activating transcription initiation by RNA polymerase II, as part of the TFIID complex. The polypeptide is Transcription initiation factor TFIID subunit 12 (Caenorhabditis elegans).